We begin with the raw amino-acid sequence, 265 residues long: Putative 2-aminoethylphosphonate transport system permease protein PhnV (265 aa).

The next 6 helical transmembrane spans lie at 13-33 (GVVASVLFIVFFFLPLAVILM), 69-89 (LTIGFCASLFALLCGVWAALA), 104-124 (VFYLPSAIPSVSVGLGILVAF), 131-151 (MNGTLWIVLTAHFVLISAFTF), 185-205 (LPLLMPWMVSALALSLSLSMG), and 233-253 (NIADGAALTIVLVAITLLLMM). An ABC transmembrane type-1 domain is found at 65 to 253 (LLASLTIGFC…LVAITLLLMM (189 aa)).

This sequence belongs to the binding-protein-dependent transport system permease family.

It is found in the cell inner membrane. Probably part of the PhnSTUV complex (TC 3.A.1.11.5) involved in 2-aminoethylphosphonate import. Probably responsible for the translocation of the substrate across the membrane. The chain is Putative 2-aminoethylphosphonate transport system permease protein PhnV (phnV) from Salmonella paratyphi A (strain ATCC 9150 / SARB42).